Here is a 96-residue protein sequence, read N- to C-terminus: Protein RnfH (96 aa).

Belongs to the UPF0125 (RnfH) family.

In Escherichia coli O17:K52:H18 (strain UMN026 / ExPEC), this protein is Protein RnfH.